A 348-amino-acid chain; its full sequence is Calcium homeostasis modulator protein 1 (348 aa).

Residues 1-20 (MDKFRMIFQFLQSNQESFMN) lie on the Cytoplasmic side of the membrane. A central pore region spans residues 9–36 (QFLQSNQESFMNGICGIMALASAQMYSA). Residues 21 to 36 (GICGIMALASAQMYSA) form a helical membrane-spanning segment. The Extracellular segment spans residues 37–48 (FDFNCPCLPGYN). Intrachain disulfides connect Cys41–Cys126 and Cys43–Cys160. The chain crosses the membrane as a helical span at residues 49–71 (VVYSLGILLTPPLVLFLLGLVMN). Residues 62–69 (VLFLLGLV) form a phospholipid-binding region. Topologically, residues 72–98 (NNISMLAEEWKRPAGRRAKDPAVLRYM) are cytoplasmic. The helical transmembrane segment at 99–124 (FCSMAQRALIAPVVWVAVTLLDGKCF) threads the bilayer. A lipid anchor (S-palmitoyl cysteine) is attached at Cys100. The tract at residues 104-116 (QRALIAPVVWVAV) is phospholipid-binding. Residues 125–179 (LCAFCTAVPVATLGNGSLVPGLPAPELARLLARVPCPEIYDGNWLLAREVAVRYL) are Extracellular-facing. Asn139 carries an N-linked (GlcNAc...) asparagine glycan. A helical membrane pass occupies residues 180-205 (RCISQALGWSFVLLTTLLAFVVRSVR). The interval 191-201 (VLLTTLLAFVV) is phospholipid-binding. At 206 to 348 (PCFTQVAFLK…KEVATYFSKV (143 aa)) the chain is on the cytoplasmic side. The S-palmitoyl cysteine moiety is linked to residue Cys207. The tract at residues 324–348 (LMSNGWAGGEPRPPRKEVATYFSKV) is disordered.

It belongs to the CALHM family. In terms of assembly, oligomerizes to form hexamers and octamers. Does not form gap junctions. Associates with CALHM3 as a pore-forming subunit in a hetero-hexameric channel complex. In terms of processing, N-glycosylated. Assembly with CALHM3 is associated with N-glycan remodeling and formation of hybrid complex- and high mannose-type glycochains. This N-glycan processing regulates channel trafficking and gating kinetics. Palmitoylated by ZDHHC3, ZDHHC20 and possibly ZDHHC7. Palmitoylation regulates voltage-dependent gating of the channel by shifting it toward more depolarized potentials. In terms of tissue distribution, specifically expressed in type II taste bud cells (at protein level). Not expressed in brain.

The protein localises to the cell membrane. It localises to the endoplasmic reticulum membrane. The protein resides in the basolateral cell membrane. The enzyme catalyses ATP(in) = ATP(out). The catalysed reaction is Ca(2+)(in) = Ca(2+)(out). It carries out the reaction Mg(2+)(in) = Mg(2+)(out). It catalyses the reaction Na(+)(in) = Na(+)(out). The enzyme catalyses K(+)(in) = K(+)(out). The catalysed reaction is Li(+)(in) = Li(+)(out). It carries out the reaction Rb(+)(in) = Rb(+)(out). It catalyses the reaction Cs(+)(in) = Cs(+)(out). The enzyme catalyses chloride(in) = chloride(out). With respect to regulation, regulated by membrane voltage and extracellular Ca(2+). Inhibited by Gd(3+), ruthenium red, and Zn(2+) and partially inhibited by 2-aminoethoxydiphenyl borate. Its function is as follows. Pore-forming subunit of gustatory voltage-gated ion channels required for sensory perception of sweet, bitter and umami tastes. With CALHM3 forms a fast-activating voltage-gated ATP-release channel in type II taste bud cells, ATP acting as a neurotransmitter to activate afferent neural gustatory pathways. Acts both as a voltage-gated and calcium-activated ion channel: mediates neuronal excitability in response to membrane depolarization and low extracellular Ca(2+) concentration. Has poor ion selectivity and forms a wide pore (around 14 Angstroms) that mediates permeation of small ions including Ca(2+), Na(+), K(+) and Cl(-), as well as larger ions such as ATP(4-). Mediates Ca(2+) influx and downstream activation of the ERK1 and ERK2 cascade in neurons. Triggers endoplasmic reticulum stress by reducing the calcium content of the endoplasmic reticulum. May indirectly control amyloid precursor protein (APP) proteolysis and aggregated amyloid-beta (Abeta) peptides levels in a Ca(2+) dependent manner. This chain is Calcium homeostasis modulator protein 1, found in Mus musculus (Mouse).